The following is a 142-amino-acid chain: Large ribosomal subunit protein uL11 (142 aa).

This sequence belongs to the universal ribosomal protein uL11 family. In terms of assembly, part of the ribosomal stalk of the 50S ribosomal subunit. Interacts with L10 and the large rRNA to form the base of the stalk. L10 forms an elongated spine to which L12 dimers bind in a sequential fashion forming a multimeric L10(L12)X complex. Post-translationally, one or more lysine residues are methylated.

Functionally, forms part of the ribosomal stalk which helps the ribosome interact with GTP-bound translation factors. This chain is Large ribosomal subunit protein uL11, found in Dichelobacter nodosus (strain VCS1703A).